The following is a 212-amino-acid chain: Glycerol-3-phosphate acyltransferase (212 aa).

5 consecutive transmembrane segments (helical) span residues 9–29 (AACLVPVILTALLLLAIGYLL), 67–87 (GPALVVFLIDVGKGALAVLLA), 95–115 (WLQVLAGLAALAGHIWPVWLG), 128–148 (MFLGLAWPVGLACFGLFMAVI), and 168–190 (LMVVSGGSSAYVVVSLVASLMVL).

This sequence belongs to the PlsY family. Probably interacts with PlsX.

It localises to the cell inner membrane. The catalysed reaction is an acyl phosphate + sn-glycerol 3-phosphate = a 1-acyl-sn-glycero-3-phosphate + phosphate. It functions in the pathway lipid metabolism; phospholipid metabolism. Catalyzes the transfer of an acyl group from acyl-phosphate (acyl-PO(4)) to glycerol-3-phosphate (G3P) to form lysophosphatidic acid (LPA). This enzyme utilizes acyl-phosphate as fatty acyl donor, but not acyl-CoA or acyl-ACP. This is Glycerol-3-phosphate acyltransferase from Parasynechococcus marenigrum (strain WH8102).